The following is a 249-amino-acid chain: Small ribosomal subunit protein uS3 (249 aa).

Positions 39–108 (IRQLINKKLA…TVAVNVAEIP (70 aa)) constitute a KH type-2 domain. Residues 214–249 (ETFARPQRRDRDERRPEGGDRPARRRPTARRRTGGE) form a disordered region. Positions 220 to 235 (QRRDRDERRPEGGDRP) are enriched in basic and acidic residues. Residues 236–249 (ARRRPTARRRTGGE) are compositionally biased toward basic residues.

Belongs to the universal ribosomal protein uS3 family. In terms of assembly, part of the 30S ribosomal subunit. Forms a tight complex with proteins S10 and S14.

Its function is as follows. Binds the lower part of the 30S subunit head. Binds mRNA in the 70S ribosome, positioning it for translation. The chain is Small ribosomal subunit protein uS3 from Deinococcus radiodurans (strain ATCC 13939 / DSM 20539 / JCM 16871 / CCUG 27074 / LMG 4051 / NBRC 15346 / NCIMB 9279 / VKM B-1422 / R1).